Consider the following 242-residue polypeptide: Biosynthetic peptidoglycan transglycosylase (242 aa).

Residues 19–39 traverse the membrane as a helical segment; it reads ILAALAVFWGGGIALFSVVPV.

Belongs to the glycosyltransferase 51 family.

Its subcellular location is the cell inner membrane. It carries out the reaction [GlcNAc-(1-&gt;4)-Mur2Ac(oyl-L-Ala-gamma-D-Glu-L-Lys-D-Ala-D-Ala)](n)-di-trans,octa-cis-undecaprenyl diphosphate + beta-D-GlcNAc-(1-&gt;4)-Mur2Ac(oyl-L-Ala-gamma-D-Glu-L-Lys-D-Ala-D-Ala)-di-trans,octa-cis-undecaprenyl diphosphate = [GlcNAc-(1-&gt;4)-Mur2Ac(oyl-L-Ala-gamma-D-Glu-L-Lys-D-Ala-D-Ala)](n+1)-di-trans,octa-cis-undecaprenyl diphosphate + di-trans,octa-cis-undecaprenyl diphosphate + H(+). Its pathway is cell wall biogenesis; peptidoglycan biosynthesis. Functionally, peptidoglycan polymerase that catalyzes glycan chain elongation from lipid-linked precursors. This chain is Biosynthetic peptidoglycan transglycosylase, found in Salmonella schwarzengrund (strain CVM19633).